The following is a 464-amino-acid chain: Major capsid protein (464 aa).

Belongs to the NCLDV major capsid protein family. As to quaternary structure, homotrimer. Post-translationally, the N-terminus is blocked.

The protein localises to the virion. Its function is as follows. Major capsid protein that self assembles to form an icosahedral capsid. Represents around 50% of the total virion protein mass. This chain is Major capsid protein (MCP), found in Tipula (TIV).